The primary structure comprises 454 residues: Probable 1,4-beta-D-glucan cellobiohydrolase C (454 aa).

An N-terminal signal peptide occupies residues 1-19 (MKHLASSIALTLLLPAVQA). Positions 20 to 55 (QQTVWGQCGGQGWSGPTSCVAGAACSTLNPYYAQCI) constitute a CBM1 domain. Disulfide bonds link Cys27/Cys44 and Cys38/Cys54. Thr-rich linker stretches follow at residues 59 to 94 (TATS…PTVT) and 95 to 454 (ASGN…NPSF). A disordered region spans residues 68–95 (TTAATTTSQTTTKPTTTGPTTSAPTVTA). Asp184 is an active-site residue. Disulfide bonds link Cys185–Cys244 and Cys376–Cys423. The active-site Proton donor is Asp230. Residue Asp409 is the Nucleophile of the active site. Residue Asn413 is glycosylated (N-linked (GlcNAc...) asparagine).

This sequence belongs to the glycosyl hydrolase 6 (cellulase B) family.

Its subcellular location is the secreted. It catalyses the reaction Hydrolysis of (1-&gt;4)-beta-D-glucosidic linkages in cellulose and cellotetraose, releasing cellobiose from the non-reducing ends of the chains.. Its function is as follows. The biological conversion of cellulose to glucose generally requires three types of hydrolytic enzymes: (1) Endoglucanases which cut internal beta-1,4-glucosidic bonds; (2) Exocellobiohydrolases that cut the disaccharide cellobiose from the non-reducing end of the cellulose polymer chain; (3) Beta-1,4-glucosidases which hydrolyze the cellobiose and other short cello-oligosaccharides to glucose. This chain is Probable 1,4-beta-D-glucan cellobiohydrolase C (cbhC), found in Aspergillus fumigatus (strain CBS 144.89 / FGSC A1163 / CEA10) (Neosartorya fumigata).